A 483-amino-acid chain; its full sequence is MGSTGRDAEVTRGDFPDGFVFGVATSAYQIEGARREGGKGDNIWDVFTENKERILDGSSGEVAVDHYHRYKEDIELMASLGFRAYRFSISWPRIFPDGLGKNVNEQGVAFYNDLINFMIEKGIEPYATLYHWDLPHNLQQTVGGWLSDKIVEYFALYAEACFANFGDRVKHWITINEPLQTAVNGYGIGHFAPGGCEGETARCYLAAHYQILAHAAAVDVYRRKFKAVQGGEVGLVVDCEWAEPFSEKTEDQVAAERRLDFQLGWYLDPIYFGDYPESMRQRLGDDLPTFSEKDKEFIRNKIDFVGINHYTSRFIAHHQDPEDIYFYRVQQVERIEKWNTGEKIGERAASEWLFIVPWGLRKLLNYAAKRYGNPVIYVTENGMDEEDDQSATLDQVLNDTTRVGYFKGYLASVAQAIKDGADVRGYFAWSFLDNFEWAMGYTKRFGIVYVDYKNGLSRHPKASARWFSRFLKGDDAENKADMN.

A beta-D-glucoside contacts are provided by residues Gln29, His131, 176 to 177, Tyr310, and Glu380; that span reads NE. Catalysis depends on Glu177, which acts as the Proton donor. The active-site Nucleophile is the Glu380. Residue Asn398 is glycosylated (N-linked (GlcNAc...) asparagine). Residues Trp429, 436–437, and Phe445 each bind a beta-D-glucoside; that span reads EW.

This sequence belongs to the glycosyl hydrolase 1 family.

The enzyme catalyses Hydrolysis of terminal, non-reducing beta-D-glucosyl residues with release of beta-D-glucose.. This Oryza sativa subsp. japonica (Rice) protein is Beta-glucosidase 4 (BGLU4).